A 404-amino-acid polypeptide reads, in one-letter code: Exodeoxyribonuclease 7 large subunit (404 aa).

This sequence belongs to the XseA family. In terms of assembly, heterooligomer composed of large and small subunits.

It is found in the cytoplasm. The catalysed reaction is Exonucleolytic cleavage in either 5'- to 3'- or 3'- to 5'-direction to yield nucleoside 5'-phosphates.. Functionally, bidirectionally degrades single-stranded DNA into large acid-insoluble oligonucleotides, which are then degraded further into small acid-soluble oligonucleotides. The sequence is that of Exodeoxyribonuclease 7 large subunit from Mesoplasma florum (strain ATCC 33453 / NBRC 100688 / NCTC 11704 / L1) (Acholeplasma florum).